The following is a 144-amino-acid chain: SVVKSEDFSLPAYMDRRDHPLPEVAHVKHLSASQKALKEKEKASWSSLSMDEKVELYRIKFKESFAEMNRGSNEWKTVVGGAMFFIGFTALVIMWQKHYVYGPLPQSFDKEWVAKQTKRMLDMKVNPIQGLASKWDYEKNEWKK.

At 1-73 the chain is on the mitochondrial matrix side; the sequence is SVVKSEDFSL…SFAEMNRGSN (73 aa). An N6-acetyllysine; alternate modification is found at Lys-4. Lys-4 is modified (N6-succinyllysine; alternate). Lys-28 carries the post-translational modification N6-acetyllysine. Phosphoserine is present on residues Ser-31 and Ser-33. Lys-35 bears the N6-acetyllysine; alternate mark. An N6-succinyllysine; alternate modification is found at Lys-35. Residue Lys-42 is modified to N6-acetyllysine. A helical transmembrane segment spans residues 74-99; it reads EWKTVVGGAMFFIGFTALVIMWQKHY. Residues 100–144 are Mitochondrial intermembrane-facing; sequence VYGPLPQSFDKEWVAKQTKRMLDMKVNPIQGLASKWDYEKNEWKK.

This sequence belongs to the cytochrome c oxidase IV family. Component of the cytochrome c oxidase (complex IV, CIV), a multisubunit enzyme composed of 14 subunits. The complex is composed of a catalytic core of 3 subunits MT-CO1, MT-CO2 and MT-CO3, encoded in the mitochondrial DNA, and 11 supernumerary subunits COX4I, COX5A, COX5B, COX6A, COX6B, COX6C, COX7A, COX7B, COX7C, COX8 and NDUFA4, which are encoded in the nuclear genome. The complex exists as a monomer or a dimer and forms supercomplexes (SCs) in the inner mitochondrial membrane with NADH-ubiquinone oxidoreductase (complex I, CI) and ubiquinol-cytochrome c oxidoreductase (cytochrome b-c1 complex, complex III, CIII), resulting in different assemblies (supercomplex SCI(1)III(2)IV(1) and megacomplex MCI(2)III(2)IV(2)). Interacts with PHB2; the interaction decreases in absence of SPHK2. Interacts with AFG1L. Interacts with ABCB7; this interaction allows the regulation of cellular iron homeostasis and cellular reactive oxygen species (ROS) levels in cardiomyocytes. Interacts with FLVCR2; this interaction occurs in the absence of heme and is disrupted upon heme binding. Interacts with IRGC.

It localises to the mitochondrion inner membrane. Its pathway is energy metabolism; oxidative phosphorylation. In terms of biological role, component of the cytochrome c oxidase, the last enzyme in the mitochondrial electron transport chain which drives oxidative phosphorylation. The respiratory chain contains 3 multisubunit complexes succinate dehydrogenase (complex II, CII), ubiquinol-cytochrome c oxidoreductase (cytochrome b-c1 complex, complex III, CIII) and cytochrome c oxidase (complex IV, CIV), that cooperate to transfer electrons derived from NADH and succinate to molecular oxygen, creating an electrochemical gradient over the inner membrane that drives transmembrane transport and the ATP synthase. Cytochrome c oxidase is the component of the respiratory chain that catalyzes the reduction of oxygen to water. Electrons originating from reduced cytochrome c in the intermembrane space (IMS) are transferred via the dinuclear copper A center (CU(A)) of subunit 2 and heme A of subunit 1 to the active site in subunit 1, a binuclear center (BNC) formed by heme A3 and copper B (CU(B)). The BNC reduces molecular oxygen to 2 water molecules using 4 electrons from cytochrome c in the IMS and 4 protons from the mitochondrial matrix. The protein is Cytochrome c oxidase subunit 4 isoform 1, mitochondrial (COX4I1) of Pan troglodytes (Chimpanzee).